We begin with the raw amino-acid sequence, 217 residues long: Small ribosomal subunit protein uS3c (217 aa).

One can recognise a KH type-2 domain in the interval Ile43–Ala117.

Belongs to the universal ribosomal protein uS3 family. As to quaternary structure, part of the 30S ribosomal subunit.

The protein localises to the plastid. It localises to the chloroplast. The protein is Small ribosomal subunit protein uS3c (rps3) of Platanus occidentalis (Sycamore).